The sequence spans 232 residues: Cytidylate kinase (232 aa).

Positions 1–21 are disordered; it reads MSEDTPLVVAMDGPSGTGKSS. 13–21 contacts ATP; that stretch reads GPSGTGKSS.

This sequence belongs to the cytidylate kinase family. Type 1 subfamily.

It localises to the cytoplasm. It carries out the reaction CMP + ATP = CDP + ADP. The catalysed reaction is dCMP + ATP = dCDP + ADP. The polypeptide is Cytidylate kinase (Nocardia farcinica (strain IFM 10152)).